Consider the following 554-residue polypeptide: Movement protein Hsp70h (554 aa).

Belongs to the heat shock protein 70 family.

The protein resides in the virion. Functionally, transports viral genome to neighboring plant cells directly through plasmosdesmata, without any budding. The movement protein allows efficient cell to cell propagation, by bypassing the host cell wall barrier. Two movement proteins, p6, Hsp70h and three structural proteins, CP, CPm, and P64 are essential for cell-cell movement. Also plays a role in virion formation. Together with CPm and p64, encapsidates the 5'-terminal portion of the viral genome. In Lettuce infectious yellows virus (isolate United States/92) (LIYV), this protein is Movement protein Hsp70h.